A 292-amino-acid chain; its full sequence is Mycothiol acetyltransferase (292 aa).

2 consecutive N-acetyltransferase domains span residues 13–168 (ALDR…KWLQ) and 159–292 (KSVA…VYEK). E40 lines the 1D-myo-inositol 2-(L-cysteinylamino)-2-deoxy-alpha-D-glucopyranoside pocket. Position 77–79 (77–79 (LAV)) interacts with acetyl-CoA. 3 residues coordinate 1D-myo-inositol 2-(L-cysteinylamino)-2-deoxy-alpha-D-glucopyranoside: E179, K218, and E226. Acetyl-CoA is bound by residues 230 to 232 (VGL) and 237 to 243 (RGRGLGD). Position 264 (Y264) interacts with 1D-myo-inositol 2-(L-cysteinylamino)-2-deoxy-alpha-D-glucopyranoside.

Belongs to the acetyltransferase family. MshD subfamily. In terms of assembly, monomer.

It carries out the reaction 1D-myo-inositol 2-(L-cysteinylamino)-2-deoxy-alpha-D-glucopyranoside + acetyl-CoA = mycothiol + CoA + H(+). Its function is as follows. Catalyzes the transfer of acetyl from acetyl-CoA to desacetylmycothiol (Cys-GlcN-Ins) to form mycothiol. In Corynebacterium glutamicum (strain R), this protein is Mycothiol acetyltransferase.